Here is an 87-residue protein sequence, read N- to C-terminus: Toxin Cll3 (87 aa).

An N-terminal signal peptide occupies residues 1–19 (MNSLLMITACLAVIGTVWA). The region spanning 20–85 (KEGYIVNYYD…VWPLPNKTCY (66 aa)) is the LCN-type CS-alpha/beta domain. Intrachain disulfides connect C31/C84, C35/C60, C44/C65, and C48/C67. Y85 is subject to Tyrosine amide.

The protein belongs to the long (4 C-C) scorpion toxin superfamily. Sodium channel inhibitor family. Beta subfamily. As to expression, expressed by the venom gland.

The protein resides in the secreted. Beta toxins bind voltage-independently at site-4 of sodium channels (Nav) and shift the voltage of activation toward more negative potentials thereby affecting sodium channel activation and promoting spontaneous and repetitive firing. The protein is Toxin Cll3 of Centruroides limpidus (Mexican scorpion).